Reading from the N-terminus, the 152-residue chain is Deoxyuridine 5'-triphosphate nucleotidohydrolase (152 aa).

Substrate-binding positions include 71-73 (RSG), Asn84, 88-90 (LID), and Met98.

It belongs to the dUTPase family. It depends on Mg(2+) as a cofactor.

The enzyme catalyses dUTP + H2O = dUMP + diphosphate + H(+). Its pathway is pyrimidine metabolism; dUMP biosynthesis; dUMP from dCTP (dUTP route): step 2/2. Its function is as follows. This enzyme is involved in nucleotide metabolism: it produces dUMP, the immediate precursor of thymidine nucleotides and it decreases the intracellular concentration of dUTP so that uracil cannot be incorporated into DNA. In Shewanella putrefaciens (strain CN-32 / ATCC BAA-453), this protein is Deoxyuridine 5'-triphosphate nucleotidohydrolase.